Reading from the N-terminus, the 1597-residue chain is Glucosyltransferase-I (1597 aa).

The signal sequence occupies residues 1-38 (MEKNERFKMHKVKKRWVTISVASATMLASALGASVASA). Residues 52 to 120 (LTADQTTTNQ…QTTTNANEAK (69 aa)) form a disordered region. A compositionally biased stretch (low complexity) spans 53–114 (TADQTTTNQD…STDTAAQTTT (62 aa)). Cell wall-binding repeat units lie at residues 157 to 176 (MSNVKQVDGKYYYYDQDGNV) and 178 to 197 (KNFAVSVGEKIYYFDETGAY). The interval 200–1050 (TSKVEADKSG…DQASNKYLNV (851 aa)) is catalytic; approximate. Cell wall-binding repeat units lie at residues 1089 to 1108 (TDSFITEAGNLYYFGQDGYM), 1109 to 1128 (VTGAQNIKGSNYYFLANGAA), 1130 to 1150 (RNTVYTDAQGQNHYYGNDGKR), 1152 to 1172 (ENGYQQFGNDSWRYFKNGVMA), 1173 to 1191 (LGLTTVDGHVQYFDKDGVQ), 1193 to 1214 (KDKIIVTRDGKVRYFDQHNGNA), 1216 to 1236 (TNTFVADKTGHWYYLGKDGVA), 1237 to 1256 (VTGAQTVGKQHLYFEANGQQ), 1258 to 1279 (KGDFVTAKDGKLYFYDVDSGDM), 1281 to 1301 (TNTFIEDKAGNWFYLGKDGAA), 1302 to 1321 (VTGAQTIKGQKLYFKANGQQ), 1323 to 1343 (KGDIVKDADGKIRYYDAQTGE), 1344 to 1365 (QVFNKSVSVNGKTYYFGSDGTA), 1366 to 1380 (QTQANPKGQTFKDGS), 1415 to 1434 (LTGAQTIGNQRVYFKDNGHQ), 1436 to 1457 (KGQLVTGNDGKLRYYDANSGDQ), 1459 to 1478 (FNKSVTVNGKTYYFGSDGTA), 1485 to 1505 (KGQTFKDGSGVLRFYNLEGQY), 1508 to 1527 (GSGWYKNAQGQWLYVKDGKV), 1528 to 1547 (LTGLQTVGNQKVYFDKNGIQ), 1549 to 1570 (KGKAVRTSDGKVRYFDENSGSM), and 1572 to 1591 (TNQWKFVYGQYYYFGSDGAA). A glucan-binding; approximate region spans residues 1099 to 1597 (LYYFGQDGYM…DGAAVYRGWN (499 aa)).

It belongs to the glycosyl hydrolase 70 family.

The protein resides in the secreted. The catalysed reaction is [(1-&gt;6)-alpha-D-glucosyl](n) + sucrose = [(1-&gt;6)-alpha-D-glucosyl](n+1) + D-fructose. In terms of biological role, production of extracellular glucans, that are thought to play a key role in the development of the dental plaque because of their ability to adhere to smooth surfaces and mediate the aggregation of bacterial cells and food debris. This Streptococcus downei (Streptococcus sobrinus) protein is Glucosyltransferase-I (gtfI).